We begin with the raw amino-acid sequence, 293 residues long: 4-diphosphocytidyl-2-C-methyl-D-erythritol kinase (293 aa).

The active site involves K16. An ATP-binding site is contributed by 99-109 (PMGAGLGGGSS). D141 is a catalytic residue.

It belongs to the GHMP kinase family. IspE subfamily.

The enzyme catalyses 4-CDP-2-C-methyl-D-erythritol + ATP = 4-CDP-2-C-methyl-D-erythritol 2-phosphate + ADP + H(+). It participates in isoprenoid biosynthesis; isopentenyl diphosphate biosynthesis via DXP pathway; isopentenyl diphosphate from 1-deoxy-D-xylulose 5-phosphate: step 3/6. In terms of biological role, catalyzes the phosphorylation of the position 2 hydroxy group of 4-diphosphocytidyl-2C-methyl-D-erythritol. In Burkholderia mallei (strain NCTC 10247), this protein is 4-diphosphocytidyl-2-C-methyl-D-erythritol kinase.